A 247-amino-acid chain; its full sequence is Coiled-coil domain-containing protein 124 homolog (247 aa).

The disordered stretch occupies residues 1 to 146 (MGGKKFGTNS…TTTTGSDDHE (146 aa)). Residues 8–85 (TNSKAEEARS…QEDKEIKERY (78 aa)) adopt a coiled-coil conformation. Residues 11–114 (KAEEARSKKA…EQKQREKELA (104 aa)) show a composition bias toward basic and acidic residues. Low complexity predominate over residues 122 to 140 (VVVVPTTTTTTTTTTTTTT).

The protein belongs to the CCDC124 family. As to quaternary structure, associates with translationally inactive ribosomes in the nonrotated state.

Its function is as follows. Ribosome-binding protein involved in ribosome hibernation: associates with translationally inactive ribosomes and stabilizes the nonrotated conformation of the 80S ribosome, thereby promoting ribosome preservation and storage. In Dictyostelium discoideum (Social amoeba), this protein is Coiled-coil domain-containing protein 124 homolog.